We begin with the raw amino-acid sequence, 978 residues long: Peroxisomal ATPase PEX6 (978 aa).

An Omega-N-methylarginine modification is found at Arg-119. Residues 470–477 and 742–749 contribute to the ATP site; these read GPPGSGKT and GPPGTGKT.

Belongs to the AAA ATPase family. As to quaternary structure, interacts with PEX1; forming the PEX1-PEX6 AAA ATPase complex, which is composed of a heterohexamer formed by a trimer of PEX1-PEX6 dimers. Interacts with PEX26; interaction is direct and promotes recruitment to peroxisomal membranes. Interacts with ZFAND6.

The protein localises to the cytoplasm. It is found in the cytosol. The protein resides in the peroxisome membrane. It localises to the cell projection. Its subcellular location is the cilium. The protein localises to the photoreceptor outer segment. It catalyses the reaction ATP + H2O = ADP + phosphate + H(+). Functionally, component of the PEX1-PEX6 AAA ATPase complex, a protein dislocase complex that mediates the ATP-dependent extraction of the PEX5 receptor from peroxisomal membranes, an essential step for PEX5 recycling. Specifically recognizes PEX5 monoubiquitinated at 'Cys-11', and pulls it out of the peroxisome lumen through the PEX2-PEX10-PEX12 retrotranslocation channel. Extraction by the PEX1-PEX6 AAA ATPase complex is accompanied by unfolding of the TPR repeats and release of bound cargo from PEX5. This is Peroxisomal ATPase PEX6 from Rattus norvegicus (Rat).